A 902-amino-acid chain; its full sequence is Glutamate receptor 4 (902 aa).

The first 20 residues, 1 to 20, serve as a signal peptide directing secretion; it reads MRIISRQIVLLFSGFWGLAM. The Extracellular portion of the chain corresponds to 22–544; sequence AFPSSVQIGG…GVFSFLDPLA (523 aa). Asparagine 52, asparagine 56, asparagine 258, asparagine 371, asparagine 407, and asparagine 414 each carry an N-linked (GlcNAc...) asparagine glycan. Cysteine 84 and cysteine 331 are joined by a disulfide. L-glutamate contacts are provided by proline 500, threonine 502, and arginine 507. A helical transmembrane segment spans residues 545–565; that stretch reads YEIWMCIVFAYIGVSVVLFLV. Residues 566-592 are Cytoplasmic-facing; the sequence is SRFSPYEWHTEEPEDGKEGPSDQPPNE. Positions 593–608 form an intramembrane region, helical; Pore-forming; that stretch reads FGIFNSLWFSLGAFMQ. Residues 609–611 lie within the membrane without spanning it; it reads QGC. A lipid anchor (S-palmitoyl cysteine) is attached at cysteine 611. At 612 to 617 the chain is on the cytoplasmic side; sequence DISPRS. Residues 618-638 traverse the membrane as a helical segment; sequence LSGRIVGGVWWFFTLIIISSY. At 639–813 the chain is on the extracellular side; it reads TANLAAFLTV…DKTSALSLSN (175 aa). L-glutamate is bound by residues serine 676, threonine 677, and glutamate 727. A disulfide bridge links cysteine 740 with cysteine 795. A helical membrane pass occupies residues 814-834; the sequence is VAGVFYILVGGLGLAMLVALI. Residues 835 to 902 are Cytoplasmic-facing; the sequence is EFCYKSRAEA…GLAVIASDLP (68 aa). The S-palmitoyl cysteine moiety is linked to residue cysteine 837. At serine 862 the chain carries Phosphoserine; by PKC/PRKCG.

The protein belongs to the glutamate-gated ion channel (TC 1.A.10.1) family. GRIA4 subfamily. Homotetramer or heterotetramer of pore-forming glutamate receptor subunits. Tetramers may be formed by the dimerization of dimers. Interacts with EPB41L1 via its C-terminus. Isoform 3 interacts with PICK1. Found in a complex with GRIA1, GRIA2, GRIA3, CNIH2, CNIH3, CACNG2, CACNG3, CACNG4, CACNG5, CACNG7 and CACNG8. Interacts with CACNG5 and PRKCG. Found in a complex with GRIA1, GRIA2, GRIA3, DLG4, CACNG8 and CNIH2. Palmitoylated. Depalmitoylated upon L-glutamate stimulation. ZDHHC3/GODZ specifically palmitoylates Cys-611, which leads to Golgi retention and decreased cell surface expression. In contrast, Cys-837 palmitoylation does not affect cell surface expression but regulates stimulation-dependent endocytosis. Post-translationally, phosphorylated at Ser-862 by PRKCG; phosphorylation increases plasma membrane-associated GRI4 expression.

It localises to the cell membrane. Its subcellular location is the postsynaptic cell membrane. The protein resides in the cell projection. The protein localises to the dendrite. It catalyses the reaction Ca(2+)(in) = Ca(2+)(out). The catalysed reaction is Na(+)(in) = Na(+)(out). It carries out the reaction Mg(2+)(in) = Mg(2+)(out). Ionotropic glutamate receptor that functions as a ligand-gated cation channel, gated by L-glutamate and glutamatergic agonists such as alpha-amino-3-hydroxy-5-methyl-4-isoxazolepropionic acid (AMPA), quisqualic acid, and kainic acid. L-glutamate acts as an excitatory neurotransmitter at many synapses in the central nervous system and plays an important role in fast excitatory synaptic transmission. Binding of the excitatory neurotransmitter L-glutamate induces a conformation change, leading to the opening of the cation channel, and thereby converts the chemical signal to an electrical impulse upon entry of monovalent and divalent cations such as sodium and calcium. The receptor then desensitizes rapidly and enters a transient inactive state, characterized by the presence of bound agonist. In the presence of CACNG8, shows resensitization which is characterized by a delayed accumulation of current flux upon continued application of L-glutamate. This chain is Glutamate receptor 4, found in Macaca fascicularis (Crab-eating macaque).